The sequence spans 238 residues: Ribonuclease PH (238 aa).

Phosphate is bound by residues arginine 86 and 124–126 (GTR).

This sequence belongs to the RNase PH family. As to quaternary structure, homohexameric ring arranged as a trimer of dimers.

The catalysed reaction is tRNA(n+1) + phosphate = tRNA(n) + a ribonucleoside 5'-diphosphate. Its function is as follows. Phosphorolytic 3'-5' exoribonuclease that plays an important role in tRNA 3'-end maturation. Removes nucleotide residues following the 3'-CCA terminus of tRNAs; can also add nucleotides to the ends of RNA molecules by using nucleoside diphosphates as substrates, but this may not be physiologically important. Probably plays a role in initiation of 16S rRNA degradation (leading to ribosome degradation) during starvation. The chain is Ribonuclease PH from Actinobacillus succinogenes (strain ATCC 55618 / DSM 22257 / CCUG 43843 / 130Z).